The chain runs to 230 residues: Ribonuclease 3 (230 aa).

An RNase III domain is found at 10-133 (DPRLLSRIGY…IIGAIYLDSS (124 aa)). E46 provides a ligand contact to Mg(2+). D50 is a catalytic residue. The Mg(2+) site is built by D119 and E122. The active site involves E122. Residues 161–230 (DPKSRLQEYL…AAEILKLLEQ (70 aa)) enclose the DRBM domain.

This sequence belongs to the ribonuclease III family. As to quaternary structure, homodimer. It depends on Mg(2+) as a cofactor.

The protein localises to the cytoplasm. The enzyme catalyses Endonucleolytic cleavage to 5'-phosphomonoester.. Its function is as follows. Digests double-stranded RNA. Involved in the processing of primary rRNA transcript to yield the immediate precursors to the large and small rRNAs (23S and 16S). Processes some mRNAs, and tRNAs when they are encoded in the rRNA operon. Processes pre-crRNA and tracrRNA of type II CRISPR loci if present in the organism. The sequence is that of Ribonuclease 3 (rnc) from Acinetobacter baumannii (strain AB307-0294).